We begin with the raw amino-acid sequence, 367 residues long: Anthranilate phosphoribosyltransferase (367 aa).

The span at 1–17 shows a compositional bias: low complexity; sequence MVLSSEASSAADHSAAA. The interval 1 to 22 is disordered; the sequence is MVLSSEASSAADHSAAAPIPTS. 5-phospho-alpha-D-ribose 1-diphosphate contacts are provided by residues G104, 107–108, T112, 114–117, 132–140, and G144; these read GD, NLST, and KHGNRAASS. G104 contributes to the anthranilate binding site. S116 is a binding site for Mg(2+). An anthranilate-binding site is contributed by N135. R190 serves as a coordination point for anthranilate. 2 residues coordinate Mg(2+): D248 and E249.

This sequence belongs to the anthranilate phosphoribosyltransferase family. In terms of assembly, homodimer. It depends on Mg(2+) as a cofactor.

It catalyses the reaction N-(5-phospho-beta-D-ribosyl)anthranilate + diphosphate = 5-phospho-alpha-D-ribose 1-diphosphate + anthranilate. It participates in amino-acid biosynthesis; L-tryptophan biosynthesis; L-tryptophan from chorismate: step 2/5. Its function is as follows. Catalyzes the transfer of the phosphoribosyl group of 5-phosphorylribose-1-pyrophosphate (PRPP) to anthranilate to yield N-(5'-phosphoribosyl)-anthranilate (PRA). The protein is Anthranilate phosphoribosyltransferase of Mycobacterium ulcerans (strain Agy99).